We begin with the raw amino-acid sequence, 230 residues long: 2,3-bisphosphoglycerate-dependent phosphoglycerate mutase (230 aa).

Substrate is bound by residues 8–15 (RHGESEWN), 21–22 (TG), Arg-60, 87–90 (ERHY), Lys-98, 114–115 (RR), and 183–184 (GN). The active-site Tele-phosphohistidine intermediate is His-9. Glu-87 acts as the Proton donor/acceptor in catalysis.

The protein belongs to the phosphoglycerate mutase family. BPG-dependent PGAM subfamily.

It carries out the reaction (2R)-2-phosphoglycerate = (2R)-3-phosphoglycerate. It functions in the pathway carbohydrate degradation; glycolysis; pyruvate from D-glyceraldehyde 3-phosphate: step 3/5. Functionally, catalyzes the interconversion of 2-phosphoglycerate and 3-phosphoglycerate. In Streptococcus pneumoniae (strain ATCC BAA-255 / R6), this protein is 2,3-bisphosphoglycerate-dependent phosphoglycerate mutase.